Consider the following 148-residue polypeptide: Large ribosomal subunit protein bL9 (148 aa).

It belongs to the bacterial ribosomal protein bL9 family.

Binds to the 23S rRNA. This is Large ribosomal subunit protein bL9 from Ruminiclostridium cellulolyticum (strain ATCC 35319 / DSM 5812 / JCM 6584 / H10) (Clostridium cellulolyticum).